Consider the following 145-residue polypeptide: MIALIQRATRASVTVEDEVTGEIGPGLLVLLGVEKEDDEQKANRLCERVLGYRIFSDADGKMNLNVQQAGGSVLVVSQFTLAADTERGMRPSFSGGAAPDRAQALYEYFVERCRQQAINTQTGRFAADMQVELVNDGPVTFWLQV.

The short motif at Gly-137–Pro-138 is the Gly-cisPro motif, important for rejection of L-amino acids element.

Belongs to the DTD family. In terms of assembly, homodimer.

The protein localises to the cytoplasm. The enzyme catalyses glycyl-tRNA(Ala) + H2O = tRNA(Ala) + glycine + H(+). It carries out the reaction a D-aminoacyl-tRNA + H2O = a tRNA + a D-alpha-amino acid + H(+). Its function is as follows. An aminoacyl-tRNA editing enzyme that deacylates mischarged D-aminoacyl-tRNAs. Also deacylates mischarged glycyl-tRNA(Ala), protecting cells against glycine mischarging by AlaRS. Acts via tRNA-based rather than protein-based catalysis; rejects L-amino acids rather than detecting D-amino acids in the active site. By recycling D-aminoacyl-tRNA to D-amino acids and free tRNA molecules, this enzyme counteracts the toxicity associated with the formation of D-aminoacyl-tRNA entities in vivo and helps enforce protein L-homochirality. The protein is D-aminoacyl-tRNA deacylase of Salmonella paratyphi A (strain AKU_12601).